We begin with the raw amino-acid sequence, 341 residues long: S-adenosylmethionine:tRNA ribosyltransferase-isomerase (341 aa).

The protein belongs to the QueA family. Monomer.

The protein localises to the cytoplasm. The enzyme catalyses 7-aminomethyl-7-carbaguanosine(34) in tRNA + S-adenosyl-L-methionine = epoxyqueuosine(34) in tRNA + adenine + L-methionine + 2 H(+). It participates in tRNA modification; tRNA-queuosine biosynthesis. In terms of biological role, transfers and isomerizes the ribose moiety from AdoMet to the 7-aminomethyl group of 7-deazaguanine (preQ1-tRNA) to give epoxyqueuosine (oQ-tRNA). In Clostridium tetani (strain Massachusetts / E88), this protein is S-adenosylmethionine:tRNA ribosyltransferase-isomerase.